The chain runs to 497 residues: Alkane hydroxylase MAH1 (497 aa).

Residues 3 to 23 (MLGFYVTFIFFLVCLFTYFFL) traverse the membrane as a helical segment. Residue Cys444 coordinates heme.

This sequence belongs to the cytochrome P450 family. The cofactor is heme. Expressed in the expanding regions of the inflorescence stems, specifically to the epidermal pavement cells, petioles and siliques.

The protein localises to the endoplasmic reticulum membrane. Its function is as follows. Involved in the formation of secondary alcohols and ketones in stem cuticular wax. Catalyzes the hydroxylation of a methylene unit in the middle of alkane molecules to form secondary alcohols and possibly also a second hydroxylation leading to the corresponding ketones. This Arabidopsis thaliana (Mouse-ear cress) protein is Alkane hydroxylase MAH1.